A 413-amino-acid polypeptide reads, in one-letter code: SWIRM domain-containing protein FUN19 (413 aa).

The span at 35–51 (KASNNNNDSNKNGLNMS) shows a compositional bias: low complexity. 3 disordered regions span residues 35-55 (KASN…DYSN), 189-211 (YNDD…PLAS), and 249-271 (YSPQ…PSAS). Thr194 carries the phosphothreonine modification. Over residues 200-211 (SSSSRLPSPLAS) the composition is skewed to low complexity. Phosphoserine is present on residues Ser207 and Ser211. The SWIRM domain maps to 316–413 (LKIEWKGSPM…LQDSNFTKYL (98 aa)).

This Saccharomyces cerevisiae (strain ATCC 204508 / S288c) (Baker's yeast) protein is SWIRM domain-containing protein FUN19 (FUN19).